A 724-amino-acid chain; its full sequence is Ribosomal RNA large subunit methyltransferase K/L (724 aa).

Residues Asp-42–Leu-153 form the THUMP domain.

It belongs to the methyltransferase superfamily. RlmKL family.

The protein resides in the cytoplasm. It catalyses the reaction guanosine(2445) in 23S rRNA + S-adenosyl-L-methionine = N(2)-methylguanosine(2445) in 23S rRNA + S-adenosyl-L-homocysteine + H(+). The catalysed reaction is guanosine(2069) in 23S rRNA + S-adenosyl-L-methionine = N(2)-methylguanosine(2069) in 23S rRNA + S-adenosyl-L-homocysteine + H(+). Its function is as follows. Specifically methylates the guanine in position 2445 (m2G2445) and the guanine in position 2069 (m7G2069) of 23S rRNA. The chain is Ribosomal RNA large subunit methyltransferase K/L from Xylella fastidiosa (strain M23).